The primary structure comprises 367 residues: Phosphoribosylaminoimidazole-succinocarboxamide synthase (367 aa).

Belongs to the SAICAR synthetase family.

It catalyses the reaction 5-amino-1-(5-phospho-D-ribosyl)imidazole-4-carboxylate + L-aspartate + ATP = (2S)-2-[5-amino-1-(5-phospho-beta-D-ribosyl)imidazole-4-carboxamido]succinate + ADP + phosphate + 2 H(+). It functions in the pathway purine metabolism; IMP biosynthesis via de novo pathway; 5-amino-1-(5-phospho-D-ribosyl)imidazole-4-carboxamide from 5-amino-1-(5-phospho-D-ribosyl)imidazole-4-carboxylate: step 1/2. The protein is Phosphoribosylaminoimidazole-succinocarboxamide synthase of Aeromonas salmonicida (strain A449).